Reading from the N-terminus, the 338-residue chain is Methionine synthase (338 aa).

Zn(2+) contacts are provided by His-210, Cys-212, Glu-234, and Cys-294.

This sequence belongs to the archaeal MetE family. Requires Zn(2+) as cofactor.

It participates in amino-acid biosynthesis; L-methionine biosynthesis via de novo pathway. In terms of biological role, catalyzes the transfer of a methyl group to L-homocysteine resulting in methionine formation. The physiological methyl donor is unknown. This Pyrococcus abyssi (strain GE5 / Orsay) protein is Methionine synthase.